Consider the following 164-residue polypeptide: Phosphopantetheine adenylyltransferase (164 aa).

Residue Ser-10 participates in substrate binding. ATP contacts are provided by residues 10-11 (SF) and His-18. 3 residues coordinate substrate: Lys-42, Met-74, and Arg-88. Residues 89–91 (GLR), Glu-99, and 124–130 (YFFVSAR) contribute to the ATP site.

Belongs to the bacterial CoaD family. As to quaternary structure, homohexamer. Mg(2+) serves as cofactor.

It localises to the cytoplasm. It carries out the reaction (R)-4'-phosphopantetheine + ATP + H(+) = 3'-dephospho-CoA + diphosphate. It participates in cofactor biosynthesis; coenzyme A biosynthesis; CoA from (R)-pantothenate: step 4/5. Its function is as follows. Reversibly transfers an adenylyl group from ATP to 4'-phosphopantetheine, yielding dephospho-CoA (dPCoA) and pyrophosphate. In Anaeromyxobacter dehalogenans (strain 2CP-1 / ATCC BAA-258), this protein is Phosphopantetheine adenylyltransferase.